Here is a 560-residue protein sequence, read N- to C-terminus: Eukaryotic translation initiation factor 3 subunit D-1 (560 aa).

Residues 98-166 form a disordered region; that stretch reads VQKPPHQRGR…RGPPPKMRES (69 aa). Residues 100–121 show a composition bias toward basic residues; that stretch reads KPPHQRGRFRNMRNSRSGRGRN. Thr-128 carries the post-translational modification Phosphothreonine. The span at 147-156 shows a compositional bias: basic residues; sequence GRGMGKKFGH. An RNA gate region spans residues 291-305; it reads EFDLLTVNESSVEPP.

This sequence belongs to the eIF-3 subunit D family. As to quaternary structure, component of the eukaryotic translation initiation factor 3 (eIF-3) complex. The eIF-3 complex interacts with pix.

It localises to the cytoplasm. Its function is as follows. mRNA cap-binding component of the eukaryotic translation initiation factor 3 (eIF-3) complex, which is involved in protein synthesis of a specialized repertoire of mRNAs and, together with other initiation factors, stimulates binding of mRNA and methionyl-tRNAi to the 40S ribosome. The eIF-3 complex specifically targets and initiates translation of a subset of mRNAs involved in cell proliferation. In the eIF-3 complex, eif3d specifically recognizes and binds the 7-methylguanosine cap of a subset of mRNAs. This is Eukaryotic translation initiation factor 3 subunit D-1 from Drosophila sechellia (Fruit fly).